Here is a 434-residue protein sequence, read N- to C-terminus: 3-phosphoshikimate 1-carboxyvinyltransferase (434 aa).

Lys22, Ser23, and Arg27 together coordinate 3-phosphoshikimate. Lys22 serves as a coordination point for phosphoenolpyruvate. Phosphoenolpyruvate-binding residues include Gly94 and Arg122. Positions 167, 169, 314, and 341 each coordinate 3-phosphoshikimate. Position 169 (Gln169) interacts with phosphoenolpyruvate. The Proton acceptor role is filled by Asp314. Phosphoenolpyruvate contacts are provided by Arg345 and Arg391.

It belongs to the EPSP synthase family. As to quaternary structure, monomer.

It localises to the cytoplasm. The catalysed reaction is 3-phosphoshikimate + phosphoenolpyruvate = 5-O-(1-carboxyvinyl)-3-phosphoshikimate + phosphate. The protein operates within metabolic intermediate biosynthesis; chorismate biosynthesis; chorismate from D-erythrose 4-phosphate and phosphoenolpyruvate: step 6/7. Functionally, catalyzes the transfer of the enolpyruvyl moiety of phosphoenolpyruvate (PEP) to the 5-hydroxyl of shikimate-3-phosphate (S3P) to produce enolpyruvyl shikimate-3-phosphate and inorganic phosphate. The protein is 3-phosphoshikimate 1-carboxyvinyltransferase of Leuconostoc mesenteroides subsp. mesenteroides (strain ATCC 8293 / DSM 20343 / BCRC 11652 / CCM 1803 / JCM 6124 / NCDO 523 / NBRC 100496 / NCIMB 8023 / NCTC 12954 / NRRL B-1118 / 37Y).